A 344-amino-acid polypeptide reads, in one-letter code: Heat-inducible transcription repressor HrcA (344 aa).

The protein belongs to the HrcA family.

Functionally, negative regulator of class I heat shock genes (grpE-dnaK-dnaJ and groELS operons). Prevents heat-shock induction of these operons. This is Heat-inducible transcription repressor HrcA from Streptococcus pneumoniae serotype 19F (strain G54).